A 142-amino-acid polypeptide reads, in one-letter code: Hemoglobin subunit zeta (142 aa).

S2 bears the N-acetylserine mark. Residues 2–142 (SLTKTERTII…VSSVLTEKYR (141 aa)) enclose the Globin domain. The residue at position 29 (T29) is a Phosphothreonine. S53 carries the post-translational modification Phosphoserine. Position 59 (H59) interacts with heme b. Phosphoserine occurs at positions 73 and 82. H88 serves as a coordination point for heme b.

This sequence belongs to the globin family. Heterotetramer of two zeta chains and two epsilon chains in early embryonic hemoglobin Gower-1; two zeta chains and two gamma chains in fetal hemoglobin Portland-1. Heterotetramer of two zeta chains and two beta chains in hemoglobin Portland-2, detected in fetuses and neonates with homozygous alpha-thalassemia. As to expression, detected in fetal erythrocytes (at protein level).

Its function is as follows. The zeta chain is an alpha-type chain of mammalian embryonic hemoglobin. This Homo sapiens (Human) protein is Hemoglobin subunit zeta (HBZ).